Consider the following 196-residue polypeptide: HTH-type transcriptional regulator UidR (196 aa).

The region spanning 10–70 (QPTRTRILNA…AIILQDQERA (61 aa)) is the HTH tetR-type domain. The segment at residues 33–52 (SMKAICKSCAISPGTLYHHF) is a DNA-binding region (H-T-H motif).

Its function is as follows. Repressor for the uidRABC (gusRABC) operon. The protein is HTH-type transcriptional regulator UidR (uidR) of Escherichia coli O157:H7.